The sequence spans 333 residues: uncharacterized protein (333 aa).

The signal sequence occupies residues 1-16 (MRPFLMILSVTYIASA). An N-linked (GlcNAc...) asparagine glycan is attached at Asn204.

This is an uncharacterized protein from Encephalitozoon cuniculi (strain GB-M1) (Microsporidian parasite).